The sequence spans 117 residues: NADH-ubiquinone oxidoreductase chain 3 (117 aa).

Helical transmembrane passes span 1–21 (MLML…VMML), 57–77 (FFLI…LLPM), and 86–106 (LMNW…GLYH).

It belongs to the complex I subunit 3 family.

It localises to the mitochondrion membrane. The enzyme catalyses a ubiquinone + NADH + 5 H(+)(in) = a ubiquinol + NAD(+) + 4 H(+)(out). Functionally, core subunit of the mitochondrial membrane respiratory chain NADH dehydrogenase (Complex I) that is believed to belong to the minimal assembly required for catalysis. Complex I functions in the transfer of electrons from NADH to the respiratory chain. The immediate electron acceptor for the enzyme is believed to be ubiquinone. The sequence is that of NADH-ubiquinone oxidoreductase chain 3 (ND3) from Anopheles quadrimaculatus (Common malaria mosquito).